The primary structure comprises 510 residues: Histidine ammonia-lyase (510 aa).

The segment at residues 144–146 (ASG) is a cross-link (5-imidazolinone (Ala-Gly)). Residue S145 is modified to 2,3-didehydroalanine (Ser).

This sequence belongs to the PAL/histidase family. Post-translationally, contains an active site 4-methylidene-imidazol-5-one (MIO), which is formed autocatalytically by cyclization and dehydration of residues Ala-Ser-Gly.

The protein localises to the cytoplasm. The catalysed reaction is L-histidine = trans-urocanate + NH4(+). It participates in amino-acid degradation; L-histidine degradation into L-glutamate; N-formimidoyl-L-glutamate from L-histidine: step 1/3. The chain is Histidine ammonia-lyase from Chromobacterium violaceum (strain ATCC 12472 / DSM 30191 / JCM 1249 / CCUG 213 / NBRC 12614 / NCIMB 9131 / NCTC 9757 / MK).